A 1392-amino-acid polypeptide reads, in one-letter code: MEVLMAERANLVFHNKAIDGTAMKRLISRLIEHFGMAYTSHILDQVKTLGFQQATATSISLGIDDLLTIPSKGWLVQDAEQQSLILEKHHHYGNVHAVEKLRQSIEIWYATSEYLRQEMNPNFRMTDPFNPVHIMSFSGARGNASQVHQLVGMRGLMSDPQGQMIDLPIQSNLREGLSLTEYIISCYGARKGVVDTAVRTSDAGYLTRRLVEVVQHIVVRRTDCGTARGISVSPRNGIMPERIFSQTLIGRVLADDIYMGSRCIATRNQAIGIGLVNRFITFRAQPISIRTPFTCRSTSWICRLCYGRSPTHGDLVELGEAVGIIAGQSIGEPGTQLTLRTFHTGGVFTGGTAEHVRAPSNGKIKFNEDLVHPTRTRHGHPAFLCSIDLYVTIESEDILHNVNIPPKSLLLVQNDQYVESEQVIAEIRAGISTLNFKEKVRKHIYSDSDGEMHWSTDVYHAPEFTYGNVHLLPKTSHLWILLGGPCRSSLVYLSIHKDQDQMNAHSLSGKRRYTSNLSVTNDQARQKLFSSDFYGQKEDRIPDYSDLNRIICTGQYNLVYSPILHGNSDLLSKRRRNKFIIPLHSIQELENELMPCSGISIEIPVNGIFRRNSILAYFDDPRYRRKSSGIIKYGTIETHSVIKKEDLIEYRGVKEFRPKYQMKVDRFFFIPEEVHILPGSSSIMVRNNSIVGVDTQITLNLRSRVGGLVRVERKKKRIELKIFSGDIHFPGETDKISRHTGVLIPPGTGKRNSKEYKKVKNWIYVQRITPSKKRFFVLVRPVVTYEITDGINLGTLFPPDPLQERDNVQLRIVNYILYGNGKPIRGISDTSIQLVRTCLVLNWNQDKKSSSCEEARASFVEIRTNGLIRHFLRINLVKSPISYIGKRNDPSGSGLLSDNGSDCTNINPFSAIYSYPKAKIQQSLNQPQGTIHTLLNRNKECQSLIILSAANCSRMEPFKDVKYHSVIKESIKKDPLIPIRNSLGPLGTCLPIENFYSSYHLITHNQILVTKYLQLDNLKQTFQVIKLKYYLMDENGKIFNPDPCRNIILNPVNLNWSFLHHNYCAETSKIISLGQFICENVCIAENGPPLKSGQFILVQVDSIVIRSAKPYLATPGATVHGHYGETLNQGNTLVTFIYEKSISDDITQGLPKVEQVLEVRSIDSISMNLEKRVESWNKCIPRILGIPWGFLIGAELTIAQSRISLVNKIQQVYRSQGVQIHNRHIEIIVRQITSKVLISEDGMSNVFSPGELIGLLRAERMGRALEEAICYRVVLLGITRASLNTQSFISEASFQETARVLAKAALRGRIDWLKGLKENVVLGGVIPVGTGFKGLVHPSKQHNNIPLETKKTNLFEGEMRDILFHHRKLFDSCLSKKFHDIPEQSFIGFNDS.

Zn(2+)-binding residues include cysteine 224, cysteine 295, cysteine 302, and cysteine 305.

The protein belongs to the RNA polymerase beta' chain family. RpoC2 subfamily. As to quaternary structure, in plastids the minimal PEP RNA polymerase catalytic core is composed of four subunits: alpha, beta, beta', and beta''. When a (nuclear-encoded) sigma factor is associated with the core the holoenzyme is formed, which can initiate transcription. Zn(2+) serves as cofactor.

The protein localises to the plastid. The protein resides in the chloroplast. It catalyses the reaction RNA(n) + a ribonucleoside 5'-triphosphate = RNA(n+1) + diphosphate. DNA-dependent RNA polymerase catalyzes the transcription of DNA into RNA using the four ribonucleoside triphosphates as substrates. This chain is DNA-directed RNA polymerase subunit beta'', found in Solanum tuberosum (Potato).